A 540-amino-acid polypeptide reads, in one-letter code: FAD-binding monooxygenase lolF2 (540 aa).

FAD is bound by residues 43–46 and 55–58; these read VWRE and DSLF. NADP(+)-binding positions include 53-55, 182-188, and 205-206; these read AVD, TGPSGVQ, and QS.

This sequence belongs to the FAD-binding monooxygenase family. The cofactor is FAD.

It functions in the pathway alkaloid biosynthesis. FAD-binding monooxygenase; part of the gene cluster that mediates the biosynthesis of loline alkaloids, potent insecticidal agents composed of a pyrrolizidine ring system and an uncommon ether bridge linking carbons 2 and 7. Lolines are structurally differentiated by the various modifications of the L-amino group and include norloline, loline, N-methylloline, N-acetylloline, N-acetylnorloline, and N-formylloline. The first committed step is the condensation of O-acetyl-L-homoserine (derived from L-aspartic acid) and L-proline, probably catalyzed by the gamma-type pyridoxal 5'-phosphate(PLP)-dependent enzyme lolC, to give the diamino diacid, NACPP. Ensuing cyclization, decarboxylation, and acetylation steps yield 1-exo-acetamidopyrrolizidine (AcAP). LolO is required for installation of the ether bridge upon the pathway intermediate, 1-exo-acetamidopyrrolizidine (AcAP). In sequential 2-oxoglutarate- and O(2)-consuming steps, lolO removes hydrogens from C2 and C7 of AcAP to form both carbon-oxygen bonds in N-acetylnorloline (NANL), the precursor to all other lolines. The enzymes lolD, lolE, lolF and lolT have also been proposed to be involved in the ether-bridge installation. Further processing of the exocyclic moiety of NANL by fungal N-acetamidase (LolN), methyltransferase (LolM), and cytochrome P450 (LolP) enzymes, with occasional involvement of a plant acetyltransferase, generates the other known lolines. LolN transforms NANL to norlonine which is monomethylated and dimethylated to respectively lonine and N-methyllonine (NML) by lolM. LolP catalyzes hydroxylation of the methyl group in N-methylloline (NML) and further oxygenation to N-formylloline (NFL). A plant acetyltransferase is responsible for the acetylation of loline to form N-acetylloline (NAL). LolA might interact with aspartate kinase to prevent feedback inhibition of its activity by these end products and thereby promote production of l-homoserine from l-aspartate. This chain is FAD-binding monooxygenase lolF2, found in Epichloe uncinata (Endophyte fungus).